The chain runs to 436 residues: Phosphatidylinositol transfer protein CSR1 (436 aa).

The tract at residues 85–104 (VYDAEKVEDSDAEKEKPTPQ) is disordered. Over residues 86 to 102 (YDAEKVEDSDAEKEKPT) the composition is skewed to basic and acidic residues. Residues 188 to 347 (KKGIVKQLEL…ELGGKDEYNF (160 aa)) form the CRAL-TRIO domain.

Belongs to the PITP family. In terms of assembly, binds phosphatidylinositol (PtdIns).

The protein resides in the cytoplasm. The protein localises to the endosome. Non-classical phosphatidylinositol (PtdIns) transfer protein (PITP), which exhibits PtdIns-binding/transfer activity in the absence of detectable PtdCho-binding/transfer activity. May also regulate post-Golgi membrane-trafficking events and have a role resistance to oxidative stress. The polypeptide is Phosphatidylinositol transfer protein CSR1 (CSR1) (Eremothecium gossypii (strain ATCC 10895 / CBS 109.51 / FGSC 9923 / NRRL Y-1056) (Yeast)).